The following is a 300-amino-acid chain: Glycine--tRNA ligase alpha subunit (300 aa).

The protein belongs to the class-II aminoacyl-tRNA synthetase family. As to quaternary structure, tetramer of two alpha and two beta subunits.

It is found in the cytoplasm. The catalysed reaction is tRNA(Gly) + glycine + ATP = glycyl-tRNA(Gly) + AMP + diphosphate. This chain is Glycine--tRNA ligase alpha subunit, found in Prochlorococcus marinus (strain MIT 9313).